The following is a 330-amino-acid chain: Protein RfbI (330 aa).

The region spanning 3–89 is the 2Fe-2S ferredoxin-type domain; it reads HIIKIFPSNI…ELNAHFFPEL (87 aa). [2Fe-2S] cluster-binding residues include Cys-37, Cys-42, and Cys-45. Residues 94–192 form the FAD-binding FR-type domain; it reads KKIVPCKVNS…EGPCGTFFIR (99 aa).

[2Fe-2S] cluster serves as cofactor.

It participates in bacterial outer membrane biogenesis; LPS O-antigen biosynthesis. The protein is Protein RfbI (rfbI) of Salmonella typhimurium (strain LT2 / SGSC1412 / ATCC 700720).